The chain runs to 619 residues: 1-deoxy-D-xylulose-5-phosphate synthase (619 aa).

Thiamine diphosphate contacts are provided by residues H74 and 115 to 117 (GHS). D146 contributes to the Mg(2+) binding site. Residues 147 to 148 (GA), N175, Y285, and E365 each bind thiamine diphosphate. Mg(2+) is bound at residue N175.

It belongs to the transketolase family. DXPS subfamily. In terms of assembly, homodimer. Mg(2+) serves as cofactor. It depends on thiamine diphosphate as a cofactor.

The catalysed reaction is D-glyceraldehyde 3-phosphate + pyruvate + H(+) = 1-deoxy-D-xylulose 5-phosphate + CO2. It participates in metabolic intermediate biosynthesis; 1-deoxy-D-xylulose 5-phosphate biosynthesis; 1-deoxy-D-xylulose 5-phosphate from D-glyceraldehyde 3-phosphate and pyruvate: step 1/1. In terms of biological role, catalyzes the acyloin condensation reaction between C atoms 2 and 3 of pyruvate and glyceraldehyde 3-phosphate to yield 1-deoxy-D-xylulose-5-phosphate (DXP). This Clostridium perfringens (strain 13 / Type A) protein is 1-deoxy-D-xylulose-5-phosphate synthase.